A 195-amino-acid chain; its full sequence is Probable septum site-determining protein MinC (195 aa).

It belongs to the MinC family. Interacts with MinD and FtsZ.

Functionally, cell division inhibitor that blocks the formation of polar Z ring septums. Rapidly oscillates between the poles of the cell to destabilize FtsZ filaments that have formed before they mature into polar Z rings. Prevents FtsZ polymerization. This Helicobacter pylori (strain P12) protein is Probable septum site-determining protein MinC.